Consider the following 503-residue polypeptide: Aspartyl/glutamyl-tRNA(Asn/Gln) amidotransferase subunit B (503 aa).

It belongs to the GatB/GatE family. GatB subfamily. As to quaternary structure, heterotrimer of A, B and C subunits.

It carries out the reaction L-glutamyl-tRNA(Gln) + L-glutamine + ATP + H2O = L-glutaminyl-tRNA(Gln) + L-glutamate + ADP + phosphate + H(+). It catalyses the reaction L-aspartyl-tRNA(Asn) + L-glutamine + ATP + H2O = L-asparaginyl-tRNA(Asn) + L-glutamate + ADP + phosphate + 2 H(+). Allows the formation of correctly charged Asn-tRNA(Asn) or Gln-tRNA(Gln) through the transamidation of misacylated Asp-tRNA(Asn) or Glu-tRNA(Gln) in organisms which lack either or both of asparaginyl-tRNA or glutaminyl-tRNA synthetases. The reaction takes place in the presence of glutamine and ATP through an activated phospho-Asp-tRNA(Asn) or phospho-Glu-tRNA(Gln). This chain is Aspartyl/glutamyl-tRNA(Asn/Gln) amidotransferase subunit B, found in Cereibacter sphaeroides (strain ATCC 17029 / ATH 2.4.9) (Rhodobacter sphaeroides).